A 97-amino-acid polypeptide reads, in one-letter code: Phosphoribosyl-ATP pyrophosphatase (97 aa).

It belongs to the PRA-PH family.

The protein resides in the cytoplasm. The catalysed reaction is 1-(5-phospho-beta-D-ribosyl)-ATP + H2O = 1-(5-phospho-beta-D-ribosyl)-5'-AMP + diphosphate + H(+). Its pathway is amino-acid biosynthesis; L-histidine biosynthesis; L-histidine from 5-phospho-alpha-D-ribose 1-diphosphate: step 2/9. The chain is Phosphoribosyl-ATP pyrophosphatase from Methanoculleus marisnigri (strain ATCC 35101 / DSM 1498 / JR1).